The primary structure comprises 900 residues: Bifunctional uridylyltransferase/uridylyl-removing enzyme (900 aa).

Positions 1–342 (MPQVDPELFD…PCEQPVQIQP (342 aa)) are uridylyltransferase. A uridylyl-removing region spans residues 343–705 (LNSRFQLRDG…TTQREFESGS (363 aa)). The region spanning 461 to 583 (VDAHTLNLIK…VGDQTHLDYL (123 aa)) is the HD domain. ACT domains follow at residues 706 to 789 (QIFI…IIQR) and 816 to 891 (VLEV…DNGR).

It belongs to the GlnD family. The cofactor is Mg(2+).

The enzyme catalyses [protein-PII]-L-tyrosine + UTP = [protein-PII]-uridylyl-L-tyrosine + diphosphate. The catalysed reaction is [protein-PII]-uridylyl-L-tyrosine + H2O = [protein-PII]-L-tyrosine + UMP + H(+). Uridylyltransferase (UTase) activity is inhibited by glutamine, while glutamine activates uridylyl-removing (UR) activity. Functionally, modifies, by uridylylation and deuridylylation, the PII regulatory proteins (GlnB and homologs), in response to the nitrogen status of the cell that GlnD senses through the glutamine level. Under low glutamine levels, catalyzes the conversion of the PII proteins and UTP to PII-UMP and PPi, while under higher glutamine levels, GlnD hydrolyzes PII-UMP to PII and UMP (deuridylylation). Thus, controls uridylylation state and activity of the PII proteins, and plays an important role in the regulation of nitrogen assimilation and metabolism. The sequence is that of Bifunctional uridylyltransferase/uridylyl-removing enzyme from Pseudomonas aeruginosa (strain UCBPP-PA14).